Reading from the N-terminus, the 106-residue chain is MAAAKIKRNDEVIVLSGKDKGKKGKVKCVFYNKGRVIVTGINLVKKHQKPIPNKNQPGGIIEKEASVDLSNIAIFNPTLNKADRIGFTIQNGKKIRIFKSNGDIVK.

This sequence belongs to the universal ribosomal protein uL24 family. Part of the 50S ribosomal subunit.

One of two assembly initiator proteins, it binds directly to the 5'-end of the 23S rRNA, where it nucleates assembly of the 50S subunit. Functionally, one of the proteins that surrounds the polypeptide exit tunnel on the outside of the subunit. The protein is Large ribosomal subunit protein uL24 of Blochmanniella pennsylvanica (strain BPEN).